Here is a 102-residue protein sequence, read N- to C-terminus: Small ribosomal subunit protein uS10 (102 aa).

Belongs to the universal ribosomal protein uS10 family. As to quaternary structure, part of the 30S ribosomal subunit.

Involved in the binding of tRNA to the ribosomes. The protein is Small ribosomal subunit protein uS10 of Thermococcus gammatolerans (strain DSM 15229 / JCM 11827 / EJ3).